The primary structure comprises 345 residues: Probable deoxyhypusine synthase 2 (345 aa).

The Nucleophile role is filled by lysine 292.

Belongs to the deoxyhypusine synthase family. NAD(+) serves as cofactor.

It catalyses the reaction [eIF5A protein]-L-lysine + spermidine = [eIF5A protein]-deoxyhypusine + propane-1,3-diamine. It functions in the pathway protein modification; eIF5A hypusination. Its function is as follows. Catalyzes the NAD-dependent oxidative cleavage of spermidine and the subsequent transfer of the butylamine moiety of spermidine to the epsilon-amino group of a specific lysine residue of the eIF-5A precursor protein to form the intermediate deoxyhypusine residue. The polypeptide is Probable deoxyhypusine synthase 2 (dys2) (Methanosarcina acetivorans (strain ATCC 35395 / DSM 2834 / JCM 12185 / C2A)).